The sequence spans 310 residues: Pantoate--beta-alanine ligase (310 aa).

Met-32–His-39 serves as a coordination point for ATP. The active-site Proton donor is His-39. Gln-63 is a (R)-pantoate binding site. Gln-63 serves as a coordination point for beta-alanine. Gly-175–Asp-178 is a binding site for ATP. Residue Gln-181 coordinates (R)-pantoate. Met-212–Arg-215 is an ATP binding site.

This sequence belongs to the pantothenate synthetase family. As to quaternary structure, homodimer. In terms of tissue distribution, expressed in roots, cotyledons, leaves, stems, cauline leaves, stigma, sepals and petals.

It localises to the cytoplasm. It is found in the cytosol. It carries out the reaction (R)-pantoate + beta-alanine + ATP = (R)-pantothenate + AMP + diphosphate + H(+). It participates in cofactor biosynthesis; (R)-pantothenate biosynthesis; (R)-pantothenate from (R)-pantoate and beta-alanine: step 1/1. Its activity is regulated as follows. Enzyme kinetics do not match Michaelis-Menten kinetics, suggesting allosteric behavior. Inhibited by high pantoate levels. Its function is as follows. Catalyzes the condensation of pantoate with beta-alanine to form pantothenate. Essential for panthotenate biosynthesis. The protein is Pantoate--beta-alanine ligase of Arabidopsis thaliana (Mouse-ear cress).